The primary structure comprises 802 residues: Endoplasmin (802 aa).

A signal peptide spans 1 to 21 (MRALWVLGLCCVLLTFGSARA). Positions 42 to 44 (SRT) match the SRT pseudosubstrate motif motif. Asn-62 is a glycosylation site (N-linked (GlcNAc...) asparagine). Ser-64 carries the post-translational modification Phosphoserine. N-linked (GlcNAc...) asparagine glycosylation is present at Asn-107. ATP is bound by residues Asn-107, Asp-149, and Asn-162. Lys-168 is subject to N6-(2-hydroxyisobutyryl)lysine. The residue at position 172 (Ser-172) is a Phosphoserine. Phe-199 provides a ligand contact to ATP. An N-linked (GlcNAc...) asparagine glycan is attached at Asn-217. The segment at 288-323 (TVEEPAEEEEAAKEEKEEADDEAAVEEEEEEKKPKT) is disordered. The span at 289 to 317 (VEEPAEEEEAAKEEKEEADDEAAVEEEEE) shows a compositional bias: acidic residues. The residue at position 403 (Ser-403) is a Phosphoserine. Lys-404 is modified (N6-succinyllysine). Asn-445 is a glycosylation site (N-linked (GlcNAc...) asparagine). At Ser-447 the chain carries Phosphoserine. Lys-479 is modified (N6-acetyllysine). 2 N-linked (GlcNAc...) asparagine glycosylation sites follow: Asn-481 and Asn-502. N6-succinyllysine is present on Lys-633. Residues 750-802 (DPDAKVEEEPEEEPEDTTEDTEQDEEEEMDAGTDEEEQEQEPEKKSTAEKDEL) form a disordered region. The segment covering 757 to 789 (EEPEEEPEDTTEDTEQDEEEEMDAGTDEEEQEQ) has biased composition (acidic residues). Thr-782 is subject to Phosphothreonine. The segment covering 790 to 802 (EPEKKSTAEKDEL) has biased composition (basic and acidic residues). Positions 799 to 802 (KDEL) match the Prevents secretion from ER motif.

This sequence belongs to the heat shock protein 90 family. Homodimer; disulfide-linked. Component of an EIF2 complex at least composed of CELF1/CUGBP1, CALR, CALR3, EIF2S1, EIF2S2, HSP90B1 and HSPA5. Part of a large chaperone multiprotein complex comprising DNAJB11, HSP90B1, HSPA5, HYOU, PDIA2, PDIA4, PDIA6, PPIB, SDF2L1, UGGT1 and very small amounts of ERP29, but not, or at very low levels, CALR nor CANX. Interacts with AIMP1; regulates its retention in the endoplasmic reticulum. Hyperglycosylated form interacts with OS9; promoting its degradation by the endoplasmic reticulum associated degradation (ERAD). Interacts with CNPY3. This interaction is disrupted in the presence of ATP. Interacts with TLR4 and TLR9, but not with TLR3. Interacts with MZB1 in a calcium-dependent manner. Interacts with METTL23. Interacts with IL1B; the interaction facilitates cargo translocation into the ERGIC. Interacts with EIF2AK3. Post-translationally, phosphorylated by CK2. N-glycosylated cotranslationally at Asn-217 by STT3A-containing OST-A complex: this glycosylation is constitutive. In response to various stress, 5 additional facultative sites (Asn-62, Asn-107, Asn-445, Asn-481 and Asn-502) can be glycosylated post-translationally by STT3B-containing OST-B complex, leading to a hyperglycosylated form that is degraded by the ER-associated degradation (ERAD) pathway. In normal conditions, the OST-A complex together with CCDC134 prevent glycosylation at facultative sites during protein folding, thereby preventing hyperglycosylation. Mechanistically, nascent HSP90B1 is tethered during translation to a specialized CCDC134-containing translocon that forms a microenvironment for its folding, in which STT3A associates with the SRT pseudosubstrate motif, and prevents access to facultative glycosylation sites until folding is completed, rendering its facultative sites inaccessible to the OST-B complex.

The protein resides in the endoplasmic reticulum lumen. The protein localises to the sarcoplasmic reticulum lumen. Its subcellular location is the melanosome. It carries out the reaction ATP + H2O = ADP + phosphate + H(+). Functionally, ATP-dependent chaperone involved in the processing of proteins in the endoplasmic reticulum, regulating their transport. Together with MESD, acts as a modulator of the Wnt pathway by promoting the folding of LRP6, a coreceptor of the canonical Wnt pathway. When associated with CNPY3, required for proper folding of Toll-like receptors. Promotes folding and trafficking of TLR4 to the cell surface. May participate in the unfolding of cytosolic leaderless cargos (lacking the secretion signal sequence) such as the interleukin 1/IL-1 to facilitate their translocation into the ERGIC (endoplasmic reticulum-Golgi intermediate compartment) and secretion; the translocation process is mediated by the cargo receptor TMED10. The protein is Endoplasmin (HSP90B1) of Oryctolagus cuniculus (Rabbit).